A 311-amino-acid chain; its full sequence is N-acetyl-gamma-glutamyl-phosphate reductase (311 aa).

Cys117 is a catalytic residue.

This sequence belongs to the NAGSA dehydrogenase family. Type 2 subfamily.

The protein resides in the cytoplasm. It catalyses the reaction N-acetyl-L-glutamate 5-semialdehyde + phosphate + NADP(+) = N-acetyl-L-glutamyl 5-phosphate + NADPH + H(+). Its pathway is amino-acid biosynthesis; L-arginine biosynthesis; N(2)-acetyl-L-ornithine from L-glutamate: step 3/4. Catalyzes the NADPH-dependent reduction of N-acetyl-5-glutamyl phosphate to yield N-acetyl-L-glutamate 5-semialdehyde. The chain is N-acetyl-gamma-glutamyl-phosphate reductase from Brucella anthropi (strain ATCC 49188 / DSM 6882 / CCUG 24695 / JCM 21032 / LMG 3331 / NBRC 15819 / NCTC 12168 / Alc 37) (Ochrobactrum anthropi).